The chain runs to 364 residues: NAD(P)H-quinone oxidoreductase subunit 1, chloroplastic (364 aa).

Helical transmembrane passes span 27 to 47 (IWLLVPIFTPVSGILIGVLVI), 98 to 118 (FSVGPSIAVISILLSYSVIPF), 127 to 147 (ISIGVFLWIAISSIAPIGLLM), 255 to 275 (GLFYVASYLNLLVSSLFVTVL), 301 to 321 (VFGSTIGILITLAKAYLFLFV), and 337 to 357 (LLNLGWKFLLPIALGNLLLTT).

It belongs to the complex I subunit 1 family. NDH is composed of at least 16 different subunits, 5 of which are encoded in the nucleus.

It is found in the plastid. The protein resides in the chloroplast thylakoid membrane. The enzyme catalyses a plastoquinone + NADH + (n+1) H(+)(in) = a plastoquinol + NAD(+) + n H(+)(out). It carries out the reaction a plastoquinone + NADPH + (n+1) H(+)(in) = a plastoquinol + NADP(+) + n H(+)(out). NDH shuttles electrons from NAD(P)H:plastoquinone, via FMN and iron-sulfur (Fe-S) centers, to quinones in the photosynthetic chain and possibly in a chloroplast respiratory chain. The immediate electron acceptor for the enzyme in this species is believed to be plastoquinone. Couples the redox reaction to proton translocation, and thus conserves the redox energy in a proton gradient. This is NAD(P)H-quinone oxidoreductase subunit 1, chloroplastic from Illicium oligandrum (Star anise).